Here is a 293-residue protein sequence, read N- to C-terminus: Nucleotide-binding protein HRM2_27900 (293 aa).

An ATP-binding site is contributed by 11–18 (GLSGSGKS). 62 to 65 (DIRA) serves as a coordination point for GTP.

The protein belongs to the RapZ-like family.

Displays ATPase and GTPase activities. This chain is Nucleotide-binding protein HRM2_27900, found in Desulforapulum autotrophicum (strain ATCC 43914 / DSM 3382 / VKM B-1955 / HRM2) (Desulfobacterium autotrophicum).